A 531-amino-acid polypeptide reads, in one-letter code: Beta-hexosaminidase subunit beta (531 aa).

The first 21 residues, 1 to 21, serve as a signal peptide directing secretion; it reads MEVLPGLLRLLAALVVAERWA. A disulfide bridge connects residues C67 and C111. 3 N-linked (GlcNAc...) asparagine glycosylation sites follow: N120, N164, and N301. Intrachain disulfides connect C283–C334 and C508–C525. E329 acts as the Proton donor in catalysis.

It belongs to the glycosyl hydrolase 20 family. There are 3 forms of beta-hexosaminidase: hexosaminidase A is a heterodimer composed of one subunit alpha and one subunit beta (chain A and B); hexosaminidase B is a homodimer of two beta subunits (two chains A and B); hexosaminidase S is a homodimer of two alpha subunits. The composition of the dimer (isozyme A versus isozyme S) has a significant effect on the substrate specificity of the alpha subunit active site.

The protein localises to the lysosome. Its subcellular location is the cytoplasmic vesicle. The protein resides in the secretory vesicle. It localises to the cortical granule. The enzyme catalyses Hydrolysis of terminal non-reducing N-acetyl-D-hexosamine residues in N-acetyl-beta-D-hexosaminides.. It carries out the reaction N-acetyl-beta-D-galactosaminyl-(1-&gt;4)-beta-D-3-sulfogalactosyl-(1-&gt;4)-beta-D-glucosyl-(1&lt;-&gt;1')-ceramide + H2O = a beta-D-3-sulfogalactosyl-(1-&gt;4)-beta-D-glucosyl-(1&lt;-&gt;1')-ceramide + N-acetyl-beta-D-galactosamine. The catalysed reaction is a ganglioside GM2 (d18:1(4E)) + H2O = a ganglioside GM3 (d18:1(4E)) + N-acetyl-beta-D-galactosamine. It catalyses the reaction a ganglioside GM2 + H2O = a ganglioside GM3 + N-acetyl-beta-D-galactosamine. The enzyme catalyses beta-D-GalNAc-(1-&gt;4)-alpha-L-IdoA-(1-&gt;3)-beta-D-GalNAc-4-sulfate-(1-&gt;4)-alpha-L-IdoA-(1-&gt;3)-D-GalNAc-4-sulfate + H2O = alpha-L-IdoA-(1-&gt;3)-beta-D-GalNAc-4-sulfate-(1-&gt;4)-alpha-L-IdoA-(1-&gt;3)-D-GalNAc-4-sulfate + N-acetyl-D-galactosamine. It carries out the reaction N-acetyl-beta-D-6-sulfogalactosaminyl-(1-&gt;4)-alpha-L-iduronyl-(1-&gt;3)-N-acetyl-D-6-sulfogalactosamine + H2O = alpha-L-iduronyl-(1-&gt;3)-N-acetyl-D-6-sulfogalactosamine + N-acetyl-D-6-sulfogalactosamine. With respect to regulation, addition of GM2A stimulates the hydrolysis of sulfated glycosphingolipid SM2 and the ganglioside GM2. In terms of biological role, hydrolyzes the non-reducing end N-acetyl-D-hexosamine and/or sulfated N-acetyl-D-hexosamine of glycoconjugates, such as the oligosaccharide moieties from proteins and neutral glycolipids, or from certain mucopolysaccharides. The isozyme B does not hydrolyze each of these substrates, however hydrolyzes efficiently neutral oligosaccharide. Only the isozyme A is responsible for the degradation of GM2 gangliosides in the presence of GM2A. During fertilization is responsible, at least in part, for the zona block to polyspermy. Present in the cortical granules of non-activated oocytes, is exocytosed during the cortical reaction in response to oocyte activation and inactivates the sperm galactosyltransferase-binding site, accounting for the block in sperm binding to the zona pellucida. This is Beta-hexosaminidase subunit beta from Sus scrofa (Pig).